A 203-amino-acid chain; its full sequence is Linker for activation of T-cells family member 2 (203 aa).

Over 1 to 6 (MSAELE) the chain is Extracellular. The helical; Signal-anchor for type III membrane protein transmembrane segment at 7–27 (LLWPVSGLLLLLLGATAWLCV) threads the bilayer. S-palmitoyl cysteine attachment occurs at residues Cys26 and Cys29. Residues 28-203 (HCSRPGVKRN…NGDVAAAENI (176 aa)) lie on the Cytoplasmic side of the membrane. A Phosphotyrosine modification is found at Tyr59. A phosphoserine mark is found at Ser60 and Ser95. Phosphotyrosine is present on residues Tyr139, Tyr160, and Tyr192. The interval 171–203 (ESKRTMGAPMSLSGSPDEEPDYVNGDVAAAENI) is disordered.

When phosphorylated, interacts with GRB2. May also interact with SOS1, GAB1 and CBL. In terms of processing, phosphorylated on tyrosines following cross-linking of BCR in B-cells, high affinity IgG receptor (FCGR1) in myeloid cells, or high affinity IgE receptor (FCER1) in mast cells; which induces the recruitment of GRB2. As to expression, strongly expressed in testis. Expressed in heart, spleen and lung. Present in B-cells and mast cells (at protein level).

It is found in the cell membrane. Involved in FCER1 (high affinity immunoglobulin epsilon receptor)-mediated signaling in mast cells. May also be involved in BCR (B-cell antigen receptor)-mediated signaling in B-cells and FCGR1 (high affinity immunoglobulin gamma Fc receptor I)-mediated signaling in myeloid cells. Couples activation of these receptors and their associated kinases with distal intracellular events through the recruitment of GRB2. The chain is Linker for activation of T-cells family member 2 (Lat2) from Mus musculus (Mouse).